A 114-amino-acid chain; its full sequence is Vesicle-associated membrane protein 2 (114 aa).

A compositionally biased stretch (pro residues) spans methionine 1–alanine 11. Positions methionine 1–glutamine 31 are disordered. The residue at position 2 (serine 2) is an N-acetylserine. The Cytoplasmic portion of the chain corresponds to serine 2–lysine 92. Residues arginine 29–lysine 89 form the v-SNARE coiled-coil homology domain. The helical; Anchor for type IV membrane protein transmembrane segment at methionine 93–tyrosine 111 threads the bilayer. Over phenylalanine 112 to threonine 114 the chain is Vesicular.

Belongs to the synaptobrevin family.

The protein resides in the cytoplasmic vesicle. It localises to the secretory vesicle. Its subcellular location is the synaptic vesicle membrane. It is found in the cell membrane. Involved in the targeting and/or fusion of transport vesicles to their target membrane. Major SNARE protein of synaptic vesicles which mediates fusion of synaptic vesicles to release neurotransmitters. Essential for fast vesicular exocytosis and activity-dependent neurotransmitter release as well as fast endocytosis that mediates rapid reuse of synaptic vesicles. This Xenopus laevis (African clawed frog) protein is Vesicle-associated membrane protein 2 (vamp2).